Reading from the N-terminus, the 364-residue chain is MGALCSSETYMLDKEEYKKQVEHNKSIENDLEKDRKIKILKLLILGPGESGKSTTIKQIKIIHDEGYSAEEKMVRKHGIYMNILEGIEEIHLSVGRENKSYKNPLSFDHINEVRMFTENFKKADDSEKLLGPEVINAIQKYIKDETIAMMLRDKTVYNIDDSTIYFLENFSRIIQKDYLPTEEDILKSRVPTSGVIQYKIMLKNFNFRIFDVGGQRAQRRKWLHVFDDVQAVLFITSLSEYDQVLREDATVNRMKESLNLFEKICNGRYFLNTAMILFLNKIDLFKIKIKHTNITVALTSYKGPQECDSALDYIRKRFISLNKNKKRSIYEHVTCATDTEQIQVVIDSVIDVVIQHTMQKVGIQ.

G2 is lipidated: N-myristoyl glycine. C5 is lipidated: S-palmitoyl cysteine. The 327-residue stretch at 38–364 (KILKLLILGP…QHTMQKVGIQ (327 aa)) folds into the G-alpha domain. A G1 motif region spans residues 41 to 54 (KLLILGPGESGKST). GTP-binding positions include 46-53 (GPGESGKS), 186-192 (LKSRVPT), 211-215 (DVGGQ), 280-283 (NKID), and A336. The Mg(2+) site is built by S53 and T192. Positions 184-192 (DILKSRVPT) are G2 motif. Residues 207–216 (FRIFDVGGQR) form a G3 motif region. The segment at 276 to 283 (ILFLNKID) is G4 motif. A G5 motif region spans residues 334–339 (TCATDT).

It belongs to the G-alpha family. In terms of assembly, g proteins are composed of 3 units; alpha, beta and gamma. The alpha chain contains the guanine nucleotide binding site.

Its function is as follows. Guanine nucleotide-binding proteins (G proteins) are involved as modulators or transducers in various transmembrane signaling systems. This Caenorhabditis elegans protein is Guanine nucleotide-binding protein alpha-8 subunit (gpa-8).